A 628-amino-acid polypeptide reads, in one-letter code: NUAK family SNF1-like kinase 2 (628 aa).

Met-1 bears the N-acetylmethionine mark. A Protein kinase domain is found at 53–303; the sequence is YEFLETLGKG…LEDVASHWWV (251 aa). ATP-binding positions include 59–67 and Lys-81; that span reads LGKGTYGKV. The active-site Proton acceptor is Asp-175. Thr-208 bears the Phosphothreonine; by LKB1 mark. Positions 355–493 are disordered; it reads KQHAPGGGST…KEQKPPQASG (139 aa). Residue Ser-435 is modified to Phosphoserine. A compositionally biased stretch (low complexity) spans 457–469; the sequence is SGYYSSPEPSESG. Phosphoserine occurs at positions 523, 544, 547, and 573. The interval 531–562 is disordered; it reads RPLARASRPSGAVSEDSILSSESFDQLDLPER.

This sequence belongs to the protein kinase superfamily. CAMK Ser/Thr protein kinase family. SNF1 subfamily. Mg(2+) is required as a cofactor. Phosphorylated at Thr-208 by STK11/LKB1 in complex with STE20-related adapter-alpha (STRADA) pseudo kinase and CAB39. Autophosphorylation is also possible at Thr-208.

The catalysed reaction is L-seryl-[protein] + ATP = O-phospho-L-seryl-[protein] + ADP + H(+). It carries out the reaction L-threonyl-[protein] + ATP = O-phospho-L-threonyl-[protein] + ADP + H(+). Its activity is regulated as follows. Activated by phosphorylation on Thr-208. In terms of biological role, stress-activated kinase involved in tolerance to glucose starvation. Induces cell-cell detachment by increasing F-actin conversion to G-actin. Expression is induced by CD95 or TNF-alpha, via NF-kappa-B. Protects cells from CD95-mediated apoptosis and is required for the increased motility and invasiveness of CD95-activated tumor cells. Phosphorylates LATS1 and LATS2. Plays a key role in neural tube closure during embryonic development through LATS2 phosphorylation and regulation of the nuclear localization of YAP1 a critical downstream regulatory target in the Hippo signaling pathway. The chain is NUAK family SNF1-like kinase 2 from Homo sapiens (Human).